Here is a 245-residue protein sequence, read N- to C-terminus: Putative transport permease YvfS (245 aa).

6 consecutive transmembrane segments (helical) span residues 20–40, 53–73, 103–123, 137–157, 164–184, and 214–234; these read YFVL…TNVV, HYLM…TLGI, IGQS…GAII, GLWI…IGLM, AGIS…WMPF, and GSPT…FMLL. Residues 20–242 form the ABC transmembrane type-2 domain; the sequence is YFVLWSLIMP…LLSKYIRRKQ (223 aa).

It belongs to the ABC-2 integral membrane protein family.

It localises to the cell membrane. In Bacillus subtilis (strain 168), this protein is Putative transport permease YvfS (yvfS).